A 173-amino-acid chain; its full sequence is Transmembrane protein 278 (173 aa).

The segment covering M1–V14 has biased composition (acidic residues). Residues M1–R25 form a disordered region. A run of 3 helical transmembrane segments spans residues H31 to G51, A53 to L73, and A107 to A127. Residues D141–E165 are disordered.

The protein belongs to the TMEM88 family.

The protein resides in the membrane. The polypeptide is Transmembrane protein 278 (Tmem278) (Mus musculus (Mouse)).